A 233-amino-acid polypeptide reads, in one-letter code: Thrombin-like enzyme elegaxobin-2 (233 aa).

The Peptidase S1 domain occupies V1–A224. 6 disulfide bridges follow: C7–C138, C25–C41, C73–C231, C117–C185, C149–C164, and C175–C200. The Charge relay system role is filled by H40. A glycan (N-linked (GlcNAc...) asparagine) is linked at N78. D85 acts as the Charge relay system in catalysis. S179 functions as the Charge relay system in the catalytic mechanism.

The protein belongs to the peptidase S1 family. Snake venom subfamily. Monomer. In terms of tissue distribution, expressed by the venom gland.

The protein localises to the secreted. In terms of biological role, thrombin-like snake venom serine protease that clots rabbit fibrinogen. Only the beta chain of fibrinogen (FGB) is cleaved, releasing fibrinopeptide B. Human and bovine fibrinogen are unaffected. Also cleaves Met-Lys and Arg-Ser bonds in heat-denatured bovine plasma kininogen to release Lys-bradykinin. In Protobothrops elegans (Elegant pitviper), this protein is Thrombin-like enzyme elegaxobin-2.